The following is an 874-amino-acid chain: Adhesion G-protein coupled receptor D1 (874 aa).

The first 25 residues, Met-1–Gly-25, serve as a signal peptide directing secretion. The Extracellular portion of the chain corresponds to Val-26–Ser-567. Residues Lys-79–Tyr-276 form the Pentraxin (PTX) domain. Asn-90, Asn-185, Asn-282, Asn-302, Asn-319, Asn-394, Asn-476, Asn-501, and Asn-533 each carry an N-linked (GlcNAc...) asparagine glycan. Residues Gln-371–Glu-557 form the GAIN-B domain. Disulfide bonds link Cys-510/Cys-539 and Cys-527/Cys-541. The interval Cys-510–Glu-557 is GPS. The tract at residues Asn-546 to Val-554 is stachel. Gln-563 is a 17beta-hydroxy-5alpha-androstan-3-one binding site. A helical transmembrane segment spans residues Ser-568–Val-590. Residues Leu-591 to Arg-601 are Cytoplasmic-facing. A helical membrane pass occupies residues Tyr-602–Phe-623. At Arg-624 to Cys-632 the chain is on the extracellular side. Cys-632 and Cys-704 form a disulfide bridge. Residues Gln-633 to Leu-655 traverse the membrane as a helical segment. Over His-656 to Arg-673 the chain is Cytoplasmic. Residues Tyr-674–Met-695 form a helical membrane-spanning segment. The Extracellular portion of the chain corresponds to Asp-696–Ser-710. A helical membrane pass occupies residues Gly-711 to Ile-732. At Ala-733 to Leu-757 the chain is on the cytoplasmic side. A helical membrane pass occupies residues Thr-758–Val-780. Over Asn-781–Cys-783 the chain is Extracellular. The chain crosses the membrane as a helical span at residues Ala-784 to Asn-810. Residue Asn-795 coordinates 17beta-hydroxy-5alpha-androstan-3-one. The Cytoplasmic segment spans residues Ser-811 to Val-874. The interval Thr-854–Val-874 is disordered. The segment covering Lys-861–Val-874 has biased composition (basic and acidic residues).

The protein belongs to the G-protein coupled receptor 2 family. Adhesion G-protein coupled receptor (ADGR) subfamily. In terms of assembly, heterodimer of 2 chains generated by proteolytic processing; the large extracellular N-terminal fragment and the membrane-bound C-terminal fragment predominantly remain associated and non-covalently linked. Interacts with ESYT1; interaction takes place in absence of cytosolic calcium and inhibits the G protein-coupled receptor activity of ADGRD1. In terms of processing, autoproteolytically processed at the GPS region of the GAIN-B domain; this cleavage modulates receptor activity. Cleavage takes place early in the secretory pathway before N-glycosylation. Up-regulated in CD133(+) cell population of glioblastoma.

The protein localises to the cell membrane. With respect to regulation, forms a heterodimer of 2 chains generated by proteolytic processing that remain associated through non-covalent interactions mediated by the GAIN-B domain. In the inactivated receptor, the Stachel sequence (also named stalk) is embedded in the GAIN-B domain, where it adopts a beta-strand conformation. On activation, the Stachel moves into the 7 transmembrane region and adopts a twisted hook-shaped configuration that forms contacts within the receptor, leading to coupling of a G-alpha protein, which activates signaling. The cleaved GAIN-B and N-terminal domains can then dissociate from the rest of the receptor. Interaction with ESYT1 in absence of cytosolic calcium inhibits the G protein-coupled receptor activity; interaction and inhibition is relieved when cytosolic calcium increases. Activated by AP503, a small molecule that activates ADGRD1 without activating androgen nuclear receptors: AP503 enhances muscle strength without eliciting androgenic adverse effects. Activated by the 8E3E8 antibody that targets the N-terminus. Adhesion G-protein coupled receptor (aGPCR) for androgen hormone 5alpha-dihydrotestosterone (5alpha-DHT), also named 17beta-hydroxy-5alpha-androstan-3-one, the most potent hormone among androgens. Also activated by methenolone drug. Ligand binding causes a conformation change that triggers signaling via guanine nucleotide-binding proteins (G proteins) and modulates the activity of downstream effectors, such as adenylate cyclase. ADGRD1 is coupled to G(s) G proteins and mediates activation of adenylate cyclase activity. Acts as a 5alpha-DHT receptor in muscle cells, thereby increasing intracellular cyclic AMP (cAMP) levels and enhancing muscle strength. The chain is Adhesion G-protein coupled receptor D1 from Homo sapiens (Human).